Consider the following 760-residue polypeptide: MGDRSGVGGEEGEKSVLGASAHSQAGRRQQHTPAARRGAQRAPAATAAAASRPVFAMRWCCGGSYSENGGGGGGSRGAPPTPLLTVAATSSSTAHDTFGPMQVKMLKTAVIVTEGTGESVLLDSLRASGWICTVSFPTQATSDVESICPLAVFIDLRVPHPSQIAKDVSSVSTEEVLIVSIAEKHISEKRRRALAQSNIIHHVTWNTRDVVLFDYVGRLANRIRALPALFAVLDETDQAVEICDEQRVVQYVNRAYENVTGCIRSEVIGQPESEMRRKSLPRARGEEERRRSCDWKFIRVPFANNSQFVYMKRSNTTGDTAAIFRDVSLKSLKSQTGGIEAPISEVLTMLRDVSARVDGEPAQTIKDAMKVLSSHELYAPSINRFRDADRIATQYYDGLIRLHHPARQRKRSVVDAHREKRGSHGERRRVSADVKNALENDNCWKFDILHLEKVSDHHALSQVGMKVFERWKVCDVLGCSDDLLHRWILSIEAHYHAGNTYHNATHAADVLQATSFFLDSPSVAVHVNESHAVAALLAAAVHDLDHPGRGNAYLINTRQSLAILYNDNSILENHHIALAFQLTLQHNANVNIFSSLSREEFIQMRHAMVEMVLATDISRHFEYLAKFNKMHVTDVPEEQRDTNSLTICDMLVKCADISNPAREWGLCQRWAHRIVEEYFEQTREEKEKGLPVTMEVFDRNTCNVPITQCGFIDMFAREAFATFTEFAKLGELSDQLESNYEKWKVMTSQWTPTHNTNLVL.

2 disordered regions span residues 1–47 (MGDR…AATA) and 410–429 (KRSVVDAHREKRGSHGERRR). The segment covering 33–47 (PAARRGAQRAPAATA) has biased composition (low complexity). A compositionally biased stretch (basic and acidic residues) spans 412–429 (SVVDAHREKRGSHGERRR). Positions 426–750 (ERRRVSADVK…EKWKVMTSQW (325 aa)) constitute a PDEase domain. Residue histidine 502 is the Proton donor of the active site. 4 residues coordinate a divalent metal cation: histidine 506, histidine 542, aspartate 543, and aspartate 656.

It belongs to the cyclic nucleotide phosphodiesterase family. A divalent metal cation is required as a cofactor.

It carries out the reaction a nucleoside 3',5'-cyclic phosphate + H2O = a nucleoside 5'-phosphate + H(+). The chain is Probable 3',5'-cyclic phosphodiesterase pde-6 (pde-6) from Caenorhabditis elegans.